The sequence spans 532 residues: Collagen alpha-1(XXIII) chain (532 aa).

At 1–23 (MGAGERAAGGGGAQDPGAGCGSR) the chain is on the cytoplasmic side. Residues 24 to 45 (ALSALCLLLSVGSAAACLLLGA) form a helical; Signal-anchor for type II membrane protein membrane-spanning segment. Residues 46 to 532 (QAAALHGRVA…GLPVPGCWHK (487 aa)) are Extracellular-facing. Disordered regions lie at residues 102-296 (PSEC…GEQG) and 308-532 (LDAL…CWHK). 4 consecutive Collagen-like domains span residues 108–166 (PPGP…RGAQ), 173–232 (GPPG…PGKK), 240–298 (QPGL…QGDT), and 313–372 (GPPG…MGLS). The segment covering 129 to 145 (QSGRDGYPGPLGLDGKP) has biased composition (low complexity). Pro residues predominate over residues 174–184 (PPGPPGPPGAR). Positions 196-207 (RGAQGPAGPRGE) are enriched in low complexity. The segment covering 314–326 (PPGPQGAPGPPGI) has biased composition (pro residues). Basic and acidic residues-rich tracts occupy residues 342–354 (DGEK…KGDP) and 380–393 (PKGE…DHLQ). The span at 403 to 414 (PGPPGPPGPPGP) shows a compositional bias: pro residues. 2 Collagen-like domains span residues 404–452 (GPPG…GPPG) and 455–514 (GLPG…PGLD). Basic and acidic residues-rich tracts occupy residues 427–441 (DGAK…ERGP) and 478–495 (RGEK…ERGV).

Homotrimer. In terms of processing, undergoes proteolytic cleavage by furin protease to yield a 60 kDa soluble form that forms a homotrimer and exhibits a low affinity interaction with heparin.

The protein resides in the cell membrane. This Mus musculus (Mouse) protein is Collagen alpha-1(XXIII) chain (Col23a1).